The following is a 121-amino-acid chain: MKLLIVFGLLASVYCFHRECSIQECCENQPYQIEDPCPIHYYSDWFIKIGSRKSARLVQLCEGDYGRRIPIHYEMFGNYTISCEPLEINCQAPPVGSLIVRCSYDYDFVEHHDVRVVLDFI.

An N-terminal signal peptide occupies residues 1–15 (MKLLIVFGLLASVYC). Residues 19–121 (ECSIQECCEN…HDVRVVLDFI (103 aa)) form the SARS ORF8 Ig-like domain. 3 disulfide bridges follow: Cys25/Cys90, Cys37/Cys102, and Cys61/Cys83.

The polypeptide is Non-structural protein 8 (Bat coronavirus HKU3 (BtCoV)).